The sequence spans 753 residues: 5-methyltetrahydropteroyltriglutamate--homocysteine methyltransferase (753 aa).

5-methyltetrahydropteroyltri-L-glutamate contacts are provided by residues 17–20 (RELK) and Lys117. L-homocysteine-binding positions include 431-433 (IGS) and Glu484. L-methionine is bound by residues 431 to 433 (IGS) and Glu484. Residues 515–516 (RC) and Trp561 each bind 5-methyltetrahydropteroyltri-L-glutamate. An L-homocysteine-binding site is contributed by Asp599. An L-methionine-binding site is contributed by Asp599. Glu605 is a 5-methyltetrahydropteroyltri-L-glutamate binding site. Positions 641, 643, and 665 each coordinate Zn(2+). His694 (proton donor) is an active-site residue. Cys726 serves as a coordination point for Zn(2+).

The protein belongs to the vitamin-B12 independent methionine synthase family. Zn(2+) serves as cofactor.

The catalysed reaction is 5-methyltetrahydropteroyltri-L-glutamate + L-homocysteine = tetrahydropteroyltri-L-glutamate + L-methionine. It functions in the pathway amino-acid biosynthesis; L-methionine biosynthesis via de novo pathway; L-methionine from L-homocysteine (MetE route): step 1/1. Catalyzes the transfer of a methyl group from 5-methyltetrahydrofolate to homocysteine resulting in methionine formation. This Shigella boydii serotype 4 (strain Sb227) protein is 5-methyltetrahydropteroyltriglutamate--homocysteine methyltransferase.